We begin with the raw amino-acid sequence, 374 residues long: 4-hydroxy-3-methylbut-2-en-1-yl diphosphate synthase (flavodoxin) (374 aa).

C268, C271, C303, and E310 together coordinate [4Fe-4S] cluster.

The protein belongs to the IspG family. It depends on [4Fe-4S] cluster as a cofactor.

The catalysed reaction is (2E)-4-hydroxy-3-methylbut-2-enyl diphosphate + oxidized [flavodoxin] + H2O + 2 H(+) = 2-C-methyl-D-erythritol 2,4-cyclic diphosphate + reduced [flavodoxin]. Its pathway is isoprenoid biosynthesis; isopentenyl diphosphate biosynthesis via DXP pathway; isopentenyl diphosphate from 1-deoxy-D-xylulose 5-phosphate: step 5/6. Functionally, converts 2C-methyl-D-erythritol 2,4-cyclodiphosphate (ME-2,4cPP) into 1-hydroxy-2-methyl-2-(E)-butenyl 4-diphosphate. The sequence is that of 4-hydroxy-3-methylbut-2-en-1-yl diphosphate synthase (flavodoxin) from Geobacillus kaustophilus (strain HTA426).